The chain runs to 261 residues: Putative hydro-lyase VSAL_I1435 (261 aa).

This sequence belongs to the D-glutamate cyclase family.

The chain is Putative hydro-lyase VSAL_I1435 from Aliivibrio salmonicida (strain LFI1238) (Vibrio salmonicida (strain LFI1238)).